The sequence spans 463 residues: ATP-dependent protease ATPase subunit HslU (463 aa).

ATP-binding positions include Ile-19, 61–66 (GVGKTE), Asp-277, Glu-341, and Arg-413.

It belongs to the ClpX chaperone family. HslU subfamily. In terms of assembly, a double ring-shaped homohexamer of HslV is capped on each side by a ring-shaped HslU homohexamer. The assembly of the HslU/HslV complex is dependent on binding of ATP.

The protein localises to the cytoplasm. In terms of biological role, ATPase subunit of a proteasome-like degradation complex; this subunit has chaperone activity. The binding of ATP and its subsequent hydrolysis by HslU are essential for unfolding of protein substrates subsequently hydrolyzed by HslV. HslU recognizes the N-terminal part of its protein substrates and unfolds these before they are guided to HslV for hydrolysis. This is ATP-dependent protease ATPase subunit HslU from Bacillus cereus (strain B4264).